A 37-amino-acid polypeptide reads, in one-letter code: Large ribosomal subunit protein bL36c (37 aa).

Belongs to the bacterial ribosomal protein bL36 family.

It localises to the plastid. The protein resides in the chloroplast. The chain is Large ribosomal subunit protein bL36c from Lotus japonicus (Lotus corniculatus var. japonicus).